Reading from the N-terminus, the 207-residue chain is Venom allergen 5 (207 aa).

4 disulfide bridges follow: Cys4-Cys16, Cys8-Cys105, Cys29-Cys97, and Cys173-Cys190. Residues 48-192 (VDEHNRFRQK…MKSHYLVCNY (145 aa)) form the SCP domain.

The protein belongs to the CRISP family. Venom allergen 5-like subfamily. In terms of assembly, monomer. Expressed by the venom gland.

The protein resides in the secreted. The chain is Venom allergen 5 from Polybia scutellaris rioplatensis (Camoati).